Here is a 250-residue protein sequence, read N- to C-terminus: MSGHSKWSTIKRKKGAIDSKRGKIFTKIIKEITLAARLGGGDTEGNSRLRQAILAAKNENMPRDNIDRAIKKGTGEIGGGESYEEVTYEGYGPGGVAVLVEVMTDNKNRTVAEIRHIFSKHGGNLGGNGCVSWLFEKKGSIVFDRDLIDEDALMELALEAGAEDIREEESQMDVITDPSMFDKVRDVLEGKGMKYVQASIEMVPQNTIRLDEGKAEQMLKMIEKLEDNDDVQNVYANFDIPDEIMEKLSA.

Belongs to the TACO1 family.

It is found in the cytoplasm. This is Probable transcriptional regulatory protein SYNAS_07390 from Syntrophus aciditrophicus (strain SB).